Reading from the N-terminus, the 470-residue chain is MAVPDKIVSELASWMKDQKLVAPQMKDATAFYRNLEEALDVRRSTQSMNTRGQNTWKDGSAIDFCSNDLLSLGRTGELRTEFLSELAKYPDFALYSGGSRVLGGNYDYIEKVEQEIADFLGAETALMFDSGFNGNVAIYTSIPRPGDAIVYDELVHLSTHTGMAASLAATKVAFRHNDIDAFREAMISVMESQPMIQDGSRSILVSVESVYSMDGDVCPLVEMLEIAREICPKKNFAFITDEAHATGIIGPKGVGLVKHLGLEKEIAVRLNTSGKALACTGSVVLGSATVRNAMLNFAGSVTNTTAPSFPSVAVVRSAYNLLRTGATQKAQDNIQHLVRYFFKSVSSHTLWDQANDMGLLSIPIIEESKDRDFVTHIVPIWTRQKYNWWLFFHLQLAKIAVVPINYPQVPKGKARLRIMIHATNTESEVDYLVSMIYGFVKEMMDIEESGEKGKIPKAAQKIYALMAANA.

Residues S212, H244, and T272 each coordinate pyridoxal 5'-phosphate. K275 is modified (N6-(pyridoxal phosphate)lysine).

It belongs to the class-II pyridoxal-phosphate-dependent aminotransferase family. BioF subfamily. As to quaternary structure, homodimer. Pyridoxal 5'-phosphate is required as a cofactor.

Its pathway is secondary metabolite biosynthesis. Its function is as follows. Aminoacyl transferase; part of the gene cluster that mediates the biosynthesis of sphingofungins, bioactive molecules acting as sphingolipid inhibitors via inhibiting serine palmitoyl transferase (SPT). Within the pathway, sphA transfers 2-methyl-aminomalonate and 2-hydroxymethyl-aminomalonate onto the sphB product 3-hydroxyoctadeca-4,10-dienoyl-ACP to produce the precursors of sphingofungins E and F. The substrate specificity of sphA using 2-methyl-aminomalonate and 2-hydroxymethyl-aminomalonate instread of aminomalonate is responsible for the biosynthesis of sphingofungins E and F but not B and C like in Aspergillus fumigatus. The PKS sphB does not contain any putative thioesterase domain for releasing the nascent polyketide chain and it has been suggested that aminoacyl transferases can facilitate the polyketide chain release. The sequence is that of Aminoacyl transferase sphA from Byssochlamys spectabilis (Paecilomyces variotii).